The chain runs to 265 residues: Ribosomal RNA large subunit methyltransferase E (265 aa).

Residues glycine 83, tryptophan 85, aspartate 106, aspartate 122, and aspartate 146 each coordinate S-adenosyl-L-methionine. Lysine 186 serves as the catalytic Proton acceptor. The tract at residues lysine 230–glycine 265 is disordered. Basic and acidic residues predominate over residues arginine 243–serine 257.

It belongs to the class I-like SAM-binding methyltransferase superfamily. RNA methyltransferase RlmE family.

It is found in the cytoplasm. It catalyses the reaction uridine(2552) in 23S rRNA + S-adenosyl-L-methionine = 2'-O-methyluridine(2552) in 23S rRNA + S-adenosyl-L-homocysteine + H(+). Specifically methylates the uridine in position 2552 of 23S rRNA at the 2'-O position of the ribose in the fully assembled 50S ribosomal subunit. This chain is Ribosomal RNA large subunit methyltransferase E, found in Mesorhizobium japonicum (strain LMG 29417 / CECT 9101 / MAFF 303099) (Mesorhizobium loti (strain MAFF 303099)).